The chain runs to 129 residues: Large-conductance mechanosensitive channel (129 aa).

3 helical membrane passes run 8 to 28 (FIMR…AAFT), 30 to 50 (IVKS…AGAV), and 67 to 87 (GAVL…FLII).

It belongs to the MscL family. Homopentamer.

The protein localises to the cell membrane. In terms of biological role, channel that opens in response to stretch forces in the membrane lipid bilayer. May participate in the regulation of osmotic pressure changes within the cell. This Oenococcus oeni (strain ATCC BAA-331 / PSU-1) protein is Large-conductance mechanosensitive channel.